A 105-amino-acid polypeptide reads, in one-letter code: N(4)-acetylcytidine amidohydrolase (105 aa).

Residues 7 to 93 (TFFERFEHDI…VIAEIYPGLE (87 aa)) enclose the ASCH domain. K21 serves as the catalytic Proton acceptor. T24 functions as the Nucleophile in the catalytic mechanism. Catalysis depends on E74, which acts as the Proton donor.

It belongs to the N(4)-acetylcytidine amidohydrolase family.

It carries out the reaction N(4)-acetylcytidine + H2O = cytidine + acetate + H(+). The enzyme catalyses N(4)-acetyl-2'-deoxycytidine + H2O = 2'-deoxycytidine + acetate + H(+). It catalyses the reaction N(4)-acetylcytosine + H2O = cytosine + acetate + H(+). In terms of biological role, catalyzes the hydrolysis of N(4)-acetylcytidine (ac4C). The sequence is that of N(4)-acetylcytidine amidohydrolase from Shewanella baltica (strain OS223).